The following is a 501-amino-acid chain: ATP synthase subunit alpha (501 aa).

Residue 169 to 176 coordinates ATP; it reads GDRQTGKT.

This sequence belongs to the ATPase alpha/beta chains family. As to quaternary structure, F-type ATPases have 2 components, CF(1) - the catalytic core - and CF(0) - the membrane proton channel. CF(1) has five subunits: alpha(3), beta(3), gamma(1), delta(1), epsilon(1). CF(0) has three main subunits: a(1), b(2) and c(9-12). The alpha and beta chains form an alternating ring which encloses part of the gamma chain. CF(1) is attached to CF(0) by a central stalk formed by the gamma and epsilon chains, while a peripheral stalk is formed by the delta and b chains.

Its subcellular location is the cell membrane. The enzyme catalyses ATP + H2O + 4 H(+)(in) = ADP + phosphate + 5 H(+)(out). Functionally, produces ATP from ADP in the presence of a proton gradient across the membrane. The alpha chain is a regulatory subunit. This is ATP synthase subunit alpha from Streptococcus thermophilus (strain CNRZ 1066).